We begin with the raw amino-acid sequence, 1032 residues long: Chitin synthase 8 (1032 aa).

2 stretches are compositionally biased toward pro residues: residues 1–11 (MRPGDIYPPPQ) and 26–41 (PPQP…PPQQ). The segment at 1–220 (MRPGDIYPPP…DDDMNDSHPL (220 aa)) is disordered. 3 stretches are compositionally biased toward polar residues: residues 65–78 (MSPT…SRYN), 98–107 (LPTQSLSPFN), and 143–160 (TNPS…SYSY). N-linked (GlcNAc...) asparagine glycosylation occurs at asparagine 78. The span at 176–188 (PHHSSQSSVSSIP) shows a compositional bias: low complexity. Asparagine 215, asparagine 304, asparagine 473, asparagine 545, and asparagine 691 each carry an N-linked (GlcNAc...) asparagine glycan. Helical transmembrane passes span 728 to 748 (TLNM…FFVL), 762 to 782 (VNIP…LLSL), 796 to 816 (SMVG…FLAV), 842 to 862 (IVIS…MALE), 870 to 890 (FFQY…YAFC), 972 to 992 (VLLV…QASG), and 995 to 1015 (NSLA…LAFF).

This sequence belongs to the chitin synthase family.

The protein localises to the cell membrane. It carries out the reaction [(1-&gt;4)-N-acetyl-beta-D-glucosaminyl](n) + UDP-N-acetyl-alpha-D-glucosamine = [(1-&gt;4)-N-acetyl-beta-D-glucosaminyl](n+1) + UDP + H(+). Functionally, polymerizes chitin, a structural polymer of the cell wall and septum, by transferring the sugar moiety of UDP-GlcNAc to the non-reducing end of the growing chitin polymer. This is Chitin synthase 8 from Cryptococcus neoformans var. grubii serotype A (strain H99 / ATCC 208821 / CBS 10515 / FGSC 9487) (Filobasidiella neoformans var. grubii).